Here is a 149-residue protein sequence, read N- to C-terminus: D-aminoacyl-tRNA deacylase (149 aa).

A Gly-cisPro motif, important for rejection of L-amino acids motif is present at residues 137-138 (GP).

Belongs to the DTD family. In terms of assembly, homodimer.

It localises to the cytoplasm. The enzyme catalyses glycyl-tRNA(Ala) + H2O = tRNA(Ala) + glycine + H(+). It carries out the reaction a D-aminoacyl-tRNA + H2O = a tRNA + a D-alpha-amino acid + H(+). Its function is as follows. An aminoacyl-tRNA editing enzyme that deacylates mischarged D-aminoacyl-tRNAs. Also deacylates mischarged glycyl-tRNA(Ala), protecting cells against glycine mischarging by AlaRS. Acts via tRNA-based rather than protein-based catalysis; rejects L-amino acids rather than detecting D-amino acids in the active site. By recycling D-aminoacyl-tRNA to D-amino acids and free tRNA molecules, this enzyme counteracts the toxicity associated with the formation of D-aminoacyl-tRNA entities in vivo and helps enforce protein L-homochirality. This Paracoccus denitrificans (strain Pd 1222) protein is D-aminoacyl-tRNA deacylase.